The chain runs to 336 residues: Phosphate acyltransferase (336 aa).

The protein belongs to the PlsX family. In terms of assembly, homodimer. Probably interacts with PlsY.

The protein localises to the cytoplasm. The catalysed reaction is a fatty acyl-[ACP] + phosphate = an acyl phosphate + holo-[ACP]. It participates in lipid metabolism; phospholipid metabolism. Functionally, catalyzes the reversible formation of acyl-phosphate (acyl-PO(4)) from acyl-[acyl-carrier-protein] (acyl-ACP). This enzyme utilizes acyl-ACP as fatty acyl donor, but not acyl-CoA. This chain is Phosphate acyltransferase, found in Pseudomonas fluorescens (strain ATCC BAA-477 / NRRL B-23932 / Pf-5).